Here is a 629-residue protein sequence, read N- to C-terminus: MWYQESYDVIVVGGGHAGTEASLAAARMGCKTLLLTHNIDTLGQMSCNPAIGGIGKGHLVKEIDALGGLMATAIDHSAIQFRTLNSSKGPAVRATRAQADRILYRNYVRNTLENQENLTIFQQPCDDLILENDRVVGVSTQMGLKFKGKSVVLTVGTFLSGLIHIGLNNYQGGRAGDPASVNLAAKMRDMPFRMDRLKTGTPPRLDARSLDFSVMEEQAGDTPSPVFSFMGSQADHPEQISCFITHTNEQTHQHIRDGLDRSPMYTGVIEGVGPRYCPSIEDKITRFADKSSHQIFVEPEGLTTHEVYPNGISTSLPFDVQMNLVRSIKGFENAFITRPGYAIEYDYFDPRDLKQSLESKFVQNLYFAGQINGTTGYEEAGAQGLIAGANAANRVKERDEFTLGRDQAYMGVLIDDLATLGTKEPYRMFTSRAEYRLLLREDNADIRLTEQGRKIGLVGDTRWQRFNEKMENVELERQRLRSTWVQKDHTKIDQINALLKTPMSKEASLEDLIRRPEVNYTDLMKIEGLGPAIEDSQASEQIEIQTKYAGYIDRQLDEIAKKKRNEDTKIPRDFDYQQISGLSNEVVAKLKDACPETIGKASRISGITPAAISLLLVYLKKHGLLRKLA.

13–18 lines the FAD pocket; sequence GGGHAG. 273–287 is an NAD(+) binding site; that stretch reads GPRYCPSIEDKITRF.

This sequence belongs to the MnmG family. Homodimer. Heterotetramer of two MnmE and two MnmG subunits. The cofactor is FAD.

The protein localises to the cytoplasm. Its function is as follows. NAD-binding protein involved in the addition of a carboxymethylaminomethyl (cmnm) group at the wobble position (U34) of certain tRNAs, forming tRNA-cmnm(5)s(2)U34. This is tRNA uridine 5-carboxymethylaminomethyl modification enzyme MnmG from Colwellia psychrerythraea (strain 34H / ATCC BAA-681) (Vibrio psychroerythus).